Reading from the N-terminus, the 367-residue chain is Peptide chain release factor 2 (367 aa).

Residue Gln254 is modified to N5-methylglutamine.

This sequence belongs to the prokaryotic/mitochondrial release factor family. Post-translationally, methylated by PrmC. Methylation increases the termination efficiency of RF2.

The protein resides in the cytoplasm. In terms of biological role, peptide chain release factor 2 directs the termination of translation in response to the peptide chain termination codons UGA and UAA. This chain is Peptide chain release factor 2, found in Neisseria meningitidis serogroup B (strain ATCC BAA-335 / MC58).